Here is a 196-residue protein sequence, read N- to C-terminus: Pyridoxal 5'-phosphate synthase subunit PdxT (196 aa).

Position 47-49 (47-49 (GES)) interacts with L-glutamine. Cysteine 79 (nucleophile) is an active-site residue. Residues arginine 106 and 134–135 (IR) each bind L-glutamine. Active-site charge relay system residues include histidine 170 and glutamate 172.

The protein belongs to the glutaminase PdxT/SNO family. In the presence of PdxS, forms a dodecamer of heterodimers. Only shows activity in the heterodimer.

The enzyme catalyses aldehydo-D-ribose 5-phosphate + D-glyceraldehyde 3-phosphate + L-glutamine = pyridoxal 5'-phosphate + L-glutamate + phosphate + 3 H2O + H(+). The catalysed reaction is L-glutamine + H2O = L-glutamate + NH4(+). Its pathway is cofactor biosynthesis; pyridoxal 5'-phosphate biosynthesis. Catalyzes the hydrolysis of glutamine to glutamate and ammonia as part of the biosynthesis of pyridoxal 5'-phosphate. The resulting ammonia molecule is channeled to the active site of PdxS. The polypeptide is Pyridoxal 5'-phosphate synthase subunit PdxT (Bacillus cereus (strain ZK / E33L)).